The following is a 215-amino-acid chain: MAEDTETRPASAGAEEREEGEIADDGDGSAAAAAGRVSAHPLENAWTFWFDNPQGKSRAVAWGSTIHPIHTFSTVEDFWSLYNNIHHPSKLNVGADFHCFKDKIEPKWEDPICANGGKWTISCGKGKSDTFWLHTLLALIGEQFDFGDEICGAVVSVRKNQERVAIWTKNAANETAQISIGKQWKEFLDYKDSIGFVVHEDAKRSDKGAKNRYTV.

The segment at 1-35 is disordered; sequence MAEDTETRPASAGAEEREEGEIADDGDGSAAAAAG. Positions 16 to 27 are enriched in acidic residues; sequence EREEGEIADDGD. 2 EIF4G-binding regions span residues 40–43 and 50–86; these read HPLE and FDNP…NNIH. Residues 58 to 63, K90, and 108 to 109 each bind mRNA; these read RAVAWG and WE. An intrachain disulfide couples C113 to C151. An EIF4G-binding region spans residues 134-143; the sequence is HTLLALIGEQ. Residues 158 to 163 and 203 to 207 contribute to the mRNA site; these read RKNQER and KRSDK.

It belongs to the eukaryotic initiation factor 4E family. In terms of assembly, EIF4F is a multi-subunit complex, the composition of which varies with external and internal environmental conditions. It is composed of at least EIF4A, EIF4E and EIF4G. EIF4E is also known to interact with other partners. In higher plants two isoforms of EIF4F have been identified, named isoform EIF4F and isoform EIF(iso)4F. Isoform EIF4F has subunits p220 and p26, whereas isoform EIF(iso)4F has subunits p82 and p28. (Microbial infection) Interacts with potyvirus viral genome-linked protein (VPg); this interaction is possible in susceptible hosts but impaired in resistant plants. Post-translationally, according to the redox status, the Cys-113-Cys-151 disulfide bridge may have a role in regulating protein function by affecting its ability to bind capped mRNA.

The protein localises to the nucleus. The protein resides in the cytoplasm. Functionally, component of the protein complex eIF4F, which is involved in the recognition of the mRNA cap, ATP-dependent unwinding of 5'-terminal secondary structure and recruitment of mRNA to the ribosome. Recognizes and binds the 7-methylguanosine-containing mRNA cap during an early step in the initiation of protein synthesis and facilitates ribosome binding by inducing the unwinding of the mRNAs secondary structures. Key component of recessive resistance to potyviruses and bymoviruses, including barley yellow mosaic virus and barley mild mosaic virus. Its function is as follows. (Microbial infection) Susceptibility host factor required for viral infection by recruiting viral RNAs to the host ribosomal complex via an interaction with viral genome-linked protein (VPg). The sequence is that of Eukaryotic translation initiation factor 4E-1 from Hordeum vulgare subsp. vulgare (Domesticated barley).